The sequence spans 205 residues: Holliday junction branch migration complex subunit RuvA (205 aa).

The tract at residues 1 to 64 is domain I; the sequence is MIGKLRGIVD…DEAIRLIGFT (64 aa). Positions 65-143 are domain II; the sequence is TDSEREWFRL…DSMGLSAALE (79 aa). The flexible linker stretch occupies residues 144-152; that stretch reads VGVNGEAVS. The segment at 153-205 is domain III; the sequence is SVSAPARDAVSALVNLGYPQAQAMGAVAAAAKRLDDAASTEQLIRHGLKELAR.

Belongs to the RuvA family. Homotetramer. Forms an RuvA(8)-RuvB(12)-Holliday junction (HJ) complex. HJ DNA is sandwiched between 2 RuvA tetramers; dsDNA enters through RuvA and exits via RuvB. An RuvB hexamer assembles on each DNA strand where it exits the tetramer. Each RuvB hexamer is contacted by two RuvA subunits (via domain III) on 2 adjacent RuvB subunits; this complex drives branch migration. In the full resolvosome a probable DNA-RuvA(4)-RuvB(12)-RuvC(2) complex forms which resolves the HJ.

It is found in the cytoplasm. Its function is as follows. The RuvA-RuvB-RuvC complex processes Holliday junction (HJ) DNA during genetic recombination and DNA repair, while the RuvA-RuvB complex plays an important role in the rescue of blocked DNA replication forks via replication fork reversal (RFR). RuvA specifically binds to HJ cruciform DNA, conferring on it an open structure. The RuvB hexamer acts as an ATP-dependent pump, pulling dsDNA into and through the RuvAB complex. HJ branch migration allows RuvC to scan DNA until it finds its consensus sequence, where it cleaves and resolves the cruciform DNA. This is Holliday junction branch migration complex subunit RuvA from Parvibaculum lavamentivorans (strain DS-1 / DSM 13023 / NCIMB 13966).